The following is a 148-amino-acid chain: Glutamyl-tRNA(Gln) amidotransferase subunit C, mitochondrial (148 aa).

The N-terminal 10 residues, 1–10 (MLRLLNKRFY), are a transit peptide targeting the mitochondrion.

This sequence belongs to the GatC family. Subunit of the heterotrimeric GatCAB amidotransferase (AdT) complex, composed of A, B and C subunits.

Its subcellular location is the mitochondrion. It carries out the reaction L-glutamyl-tRNA(Gln) + L-glutamine + ATP + H2O = L-glutaminyl-tRNA(Gln) + L-glutamate + ADP + phosphate + H(+). In terms of biological role, allows the formation of correctly charged Gln-tRNA(Gln) through the transamidation of misacylated Glu-tRNA(Gln) in the mitochondria. The reaction takes place in the presence of glutamine and ATP through an activated gamma-phospho-Glu-tRNA(Gln). The protein is Glutamyl-tRNA(Gln) amidotransferase subunit C, mitochondrial of Drosophila ananassae (Fruit fly).